We begin with the raw amino-acid sequence, 269 residues long: Indole-3-glycerol phosphate synthase (269 aa).

It belongs to the TrpC family.

It catalyses the reaction 1-(2-carboxyphenylamino)-1-deoxy-D-ribulose 5-phosphate + H(+) = (1S,2R)-1-C-(indol-3-yl)glycerol 3-phosphate + CO2 + H2O. The protein operates within amino-acid biosynthesis; L-tryptophan biosynthesis; L-tryptophan from chorismate: step 4/5. The polypeptide is Indole-3-glycerol phosphate synthase (Roseiflexus sp. (strain RS-1)).